A 649-amino-acid polypeptide reads, in one-letter code: FAS-associated factor 1 (649 aa).

Residues 1–57 (MASNMDREMILADFQACTGIENIDEAITLLEQNNWDLVAAINGVIPQENGILQSDFG) enclose the UBA domain. Disordered regions lie at residues 56–84 (FGGE…SAFR) and 266–290 (RRTS…VSDS). Positions 68 to 82 (PASHPAPASTPSSSA) are enriched in low complexity. Residue S319 is modified to Phosphoserine. The 78-residue stretch at 568-645 (NAEPVSKLRI…NLFPQETLFL (78 aa)) folds into the UBX domain. Phosphothreonine is present on T579. S581 is subject to Phosphoserine.

Interacts with CDT1 and ATPase VCP/p97. Interacts (via UBA domain) with FAS (via death domain). Interacts (via UBA domain) with NLRP12 (via DAPIN/PYRIN domain).

The protein resides in the nucleus. Its function is as follows. Ubiquitin-binding protein. Required for the progression of DNA replication forks by targeting DNA replication licensing factor CDT1 for degradation. Potentiates but cannot initiate FAS-induced apoptosis. This is FAS-associated factor 1 (Faf1) from Mus musculus (Mouse).